The chain runs to 103 residues: ATP-dependent Clp protease adapter protein ClpS (103 aa).

The protein belongs to the ClpS family. In terms of assembly, binds to the N-terminal domain of the chaperone ClpA.

Functionally, involved in the modulation of the specificity of the ClpAP-mediated ATP-dependent protein degradation. The chain is ATP-dependent Clp protease adapter protein ClpS from Nitrosomonas eutropha (strain DSM 101675 / C91 / Nm57).